The following is a 1368-amino-acid chain: DNA-directed RNA polymerase subunit beta (1368 aa).

This sequence belongs to the RNA polymerase beta chain family. In terms of assembly, the RNAP catalytic core consists of 2 alpha, 1 beta, 1 beta' and 1 omega subunit. When a sigma factor is associated with the core the holoenzyme is formed, which can initiate transcription.

The enzyme catalyses RNA(n) + a ribonucleoside 5'-triphosphate = RNA(n+1) + diphosphate. Its function is as follows. DNA-dependent RNA polymerase catalyzes the transcription of DNA into RNA using the four ribonucleoside triphosphates as substrates. The chain is DNA-directed RNA polymerase subunit beta from Cupriavidus taiwanensis (strain DSM 17343 / BCRC 17206 / CCUG 44338 / CIP 107171 / LMG 19424 / R1) (Ralstonia taiwanensis (strain LMG 19424)).